Here is a 20-residue protein sequence, read N- to C-terminus: Phylloseptin-O1 (20 aa).

Glycine 20 is subject to Glycine amide.

Expressed by the skin glands.

It is found in the secreted. Has antiprotozoal activity against T.cruzi. The sequence is that of Phylloseptin-O1 (psn4) from Pithecopus oreades (Orange-legged leaf frog).